The primary structure comprises 365 residues: UDP-N-acetylglucosamine--N-acetylmuramyl-(pentapeptide) pyrophosphoryl-undecaprenol N-acetylglucosamine transferase (365 aa).

UDP-N-acetyl-alpha-D-glucosamine is bound by residues 17 to 19, asparagine 129, arginine 167, serine 194, isoleucine 250, 269 to 274, and glutamine 295; these read TGG and ALTVSE.

Belongs to the glycosyltransferase 28 family. MurG subfamily.

The protein localises to the cell inner membrane. It catalyses the reaction di-trans,octa-cis-undecaprenyl diphospho-N-acetyl-alpha-D-muramoyl-L-alanyl-D-glutamyl-meso-2,6-diaminopimeloyl-D-alanyl-D-alanine + UDP-N-acetyl-alpha-D-glucosamine = di-trans,octa-cis-undecaprenyl diphospho-[N-acetyl-alpha-D-glucosaminyl-(1-&gt;4)]-N-acetyl-alpha-D-muramoyl-L-alanyl-D-glutamyl-meso-2,6-diaminopimeloyl-D-alanyl-D-alanine + UDP + H(+). Its pathway is cell wall biogenesis; peptidoglycan biosynthesis. Its function is as follows. Cell wall formation. Catalyzes the transfer of a GlcNAc subunit on undecaprenyl-pyrophosphoryl-MurNAc-pentapeptide (lipid intermediate I) to form undecaprenyl-pyrophosphoryl-MurNAc-(pentapeptide)GlcNAc (lipid intermediate II). The polypeptide is UDP-N-acetylglucosamine--N-acetylmuramyl-(pentapeptide) pyrophosphoryl-undecaprenol N-acetylglucosamine transferase (Shewanella sediminis (strain HAW-EB3)).